The chain runs to 874 residues: Alanine--tRNA ligase (874 aa).

Residues histidine 562, histidine 566, cysteine 665, and histidine 669 each contribute to the Zn(2+) site.

The protein belongs to the class-II aminoacyl-tRNA synthetase family. Requires Zn(2+) as cofactor.

The protein resides in the cytoplasm. The enzyme catalyses tRNA(Ala) + L-alanine + ATP = L-alanyl-tRNA(Ala) + AMP + diphosphate. Catalyzes the attachment of alanine to tRNA(Ala) in a two-step reaction: alanine is first activated by ATP to form Ala-AMP and then transferred to the acceptor end of tRNA(Ala). Also edits incorrectly charged Ser-tRNA(Ala) and Gly-tRNA(Ala) via its editing domain. In Stutzerimonas stutzeri (strain A1501) (Pseudomonas stutzeri), this protein is Alanine--tRNA ligase.